Reading from the N-terminus, the 193-residue chain is Cilia- and flagella-associated protein 20 (193 aa).

It belongs to the CFAP20 family. Microtubule inner protein component of sperm flagellar doublet microtubules.

Its subcellular location is the nucleus. The protein resides in the cytoplasm. The protein localises to the cytoskeleton. It is found in the microtubule organizing center. It localises to the centrosome. Its subcellular location is the centriole. The protein resides in the cilium basal body. The protein localises to the cilium axoneme. It is found in the flagellum axoneme. Functionally, cilium- and flagellum-specific protein that plays a role in axonemal structure organization and motility. Microtubule inner protein (MIP) part of the dynein-decorated doublet microtubules (DMTs) in cilia axoneme, which is required for motile cilia beating. Involved in the regulation of the size and morphology of cilia. Required for axonemal microtubules polyglutamylation. The chain is Cilia- and flagella-associated protein 20 from Homo sapiens (Human).